We begin with the raw amino-acid sequence, 415 residues long: Translation initiation factor 2 subunit gamma (415 aa).

Positions 7–206 (QPEVNIGVVG…GIEEYIKTPY (200 aa)) constitute a tr-type G domain. The segment at 16-23 (GHVDHGKT) is G1. The Mg(2+) site is built by Asp-19, Thr-23, Gly-44, and Thr-46. 19-24 (DHGKTT) lines the GTP pocket. Positions 44–48 (GMTIK) are G2. Zn(2+) is bound by residues Cys-59, Cys-62, Cys-74, and Cys-77. The segment at 93–96 (DAPG) is G3. GTP is bound by residues 149–152 (NKVD) and 184–186 (SAL). A G4 region spans residues 149–152 (NKVD). The G5 stretch occupies residues 184–186 (SAL).

Belongs to the TRAFAC class translation factor GTPase superfamily. Classic translation factor GTPase family. EIF2G subfamily. In terms of assembly, heterotrimer composed of an alpha, a beta and a gamma chain. Requires Mg(2+) as cofactor.

The enzyme catalyses GTP + H2O = GDP + phosphate + H(+). In terms of biological role, eIF-2 functions in the early steps of protein synthesis by forming a ternary complex with GTP and initiator tRNA. The sequence is that of Translation initiation factor 2 subunit gamma from Saccharolobus solfataricus (strain ATCC 35092 / DSM 1617 / JCM 11322 / P2) (Sulfolobus solfataricus).